Here is a 149-residue protein sequence, read N- to C-terminus: D-aminoacyl-tRNA deacylase (149 aa).

The Gly-cisPro motif, important for rejection of L-amino acids motif lies at 137–138 (GP).

It belongs to the DTD family. Homodimer.

It localises to the cytoplasm. It catalyses the reaction glycyl-tRNA(Ala) + H2O = tRNA(Ala) + glycine + H(+). The enzyme catalyses a D-aminoacyl-tRNA + H2O = a tRNA + a D-alpha-amino acid + H(+). Its function is as follows. An aminoacyl-tRNA editing enzyme that deacylates mischarged D-aminoacyl-tRNAs. Also deacylates mischarged glycyl-tRNA(Ala), protecting cells against glycine mischarging by AlaRS. Acts via tRNA-based rather than protein-based catalysis; rejects L-amino acids rather than detecting D-amino acids in the active site. By recycling D-aminoacyl-tRNA to D-amino acids and free tRNA molecules, this enzyme counteracts the toxicity associated with the formation of D-aminoacyl-tRNA entities in vivo and helps enforce protein L-homochirality. The polypeptide is D-aminoacyl-tRNA deacylase (Clostridium tetani (strain Massachusetts / E88)).